Consider the following 651-residue polypeptide: Apical membrane antigen 1-like protein (651 aa).

Positions 1-41 are cleaved as a signal peptide; it reads MPTESRSILARAEETRCRHLSRLLRAGLVFLLCDVLTSCLA. The propeptide at 42–81 is removed in mature form; the sequence is TPELQNTVIRSSKAHHLQLLFSSRSTPAVKFPLDATLSAP. Topologically, residues 42–570 are extracellular; that stretch reads TPELQNTVIR…VEKEGSGGNT (529 aa). 7 cysteine pairs are disulfide-bonded: Cys-141/Cys-309, Cys-215/Cys-248, Cys-264/Cys-277, Cys-327/Cys-417, Cys-347/Cys-408, Cys-441/Cys-463, and Cys-453/Cys-475. A glycan (N-linked (GlcNAc...) asparagine) is linked at Asn-230. One copy of the 1; approximate repeat lies at 483 to 486; it reads PPVK. The 12 x 4 AA approximate tandem-repeats of P-P-V-E stretch occupies residues 483-531; the sequence is PPVKPPVEPPVEPPVEPPVEPPVEPPVEPPVEPPVEPPVEPPVVEPPTE. Residues 483 to 547 show a composition bias toward pro residues; the sequence is PPVKPPVEPP…EPPVVLPPTP (65 aa). The interval 483-567 is disordered; it reads PPVKPPVEPP…DETVEKEGSG (85 aa). Repeat copies occupy residues 487 to 490, 491 to 494, 495 to 498, 499 to 502, 503 to 506, 507 to 510, 511 to 514, 515 to 518, and 519 to 522. An 11; approximate repeat occupies 523–527; it reads PPVVE. A 12; approximate repeat occupies 528–531; that stretch reads PPTE. A helical membrane pass occupies residues 571-591; it reads ALIAGSVLGMLIILALVGTCV. Residues 592 to 651 lie on the Cytoplasmic side of the membrane; that stretch reads GFYYRKRPLPPTERPTVEASGGREVEGPSDVAVPPDHSWWGEGEHETESLLGSRAVDAEF. The interval 598–651 is disordered; the sequence is RPLPPTERPTVEASGGREVEGPSDVAVPPDHSWWGEGEHETESLLGSRAVDAEF.

The protein belongs to the apicomplexan parasites AMA1 family. Post-translationally, proteolytically cleaved within its transmembrane domain, releasing a soluble form from the cell surface.

The protein resides in the cell membrane. It is found in the secreted. Its function is as follows. May play a role in host cell invasion. This is Apical membrane antigen 1-like protein from Toxoplasma gondii (strain ATCC 50861 / VEG).